Consider the following 304-residue polypeptide: DCN1-like protein 3 (304 aa).

Disordered regions lie at residues 1–87 (MGQC…EESS) and 284–304 (EVEGRGTLSSGQEGLCPEEQT). Gly2 is lipidated: N-myristoyl glycine. The DCUN1 domain occupies 86–278 (SSLQRLEELF…LFDTFVEWEM (193 aa)).

Part of a complex containing DCUN1D3, CUL3 and RBX1. Interacts (via the DCUN1 domain) with the unneddylated cullins: interacts with CUL1, CUL2, CUL3, CUL4A, CUL4B and CUL5; these interactions promote the cullin neddylation and the identity of the cullin dictates the affinity of the interaction. Interacts preferentially with CUL3; this interaction triggers the relocalization of CUL3 to the cell membrane where CUL3 is neddylated. Interacts (via DCUN1 domain) with RBX1. May also interact with regulators or subunits of cullin-RING ligases such as RNF7, ELOB and DDB1; these interactions are bridged by cullins. Interacts (via DCUN1 domain) with CAND1; this interaction is bridged by cullins and strongly inhibits cullin neddylation. These CAND-cullin-DCNL complexes can only be neddylated in the presence of a substrate adapter. Interacts (via DCUN1 domain) with the N-terminally acetylated form of UBE2M and UBE2F. As to expression, highest levels of expression are in the testis. Very low levels of expression in the heart, brain, skeletal muscle, kidney, liver, spleen, lung and ovary.

Its subcellular location is the cell membrane. It is found in the cytoplasm. The protein localises to the nucleus. The protein resides in the perinuclear region. Contributes to the neddylation of all cullins by transferring NEDD8 from N-terminally acetylated NEDD8-conjugating E2s enzyme to different cullin C-terminal domain-RBX complexes and may play a role in the cell cycle progression by regulating the SCF ubiquitin E3 ligase complex, after UV damage. At the cell membrane, can promote and as well inhibit cullins neddylation. The chain is DCN1-like protein 3 from Mus musculus (Mouse).